The chain runs to 204 residues: Large ribosomal subunit protein uL4 (204 aa).

A disordered region spans residues 49–76; it reads KTKGISDVSGTTAKPYGQKRTGRARQGS.

This sequence belongs to the universal ribosomal protein uL4 family. As to quaternary structure, part of the 50S ribosomal subunit.

One of the primary rRNA binding proteins, this protein initially binds near the 5'-end of the 23S rRNA. It is important during the early stages of 50S assembly. It makes multiple contacts with different domains of the 23S rRNA in the assembled 50S subunit and ribosome. In terms of biological role, forms part of the polypeptide exit tunnel. The sequence is that of Large ribosomal subunit protein uL4 from Wolbachia sp. subsp. Drosophila simulans (strain wRi).